Reading from the N-terminus, the 620-residue chain is Chaperone protein DnaK (620 aa).

T197 is subject to Phosphothreonine; by autocatalysis. Residues 597–620 (AMANKNNAEQPKKKDDDVIDAEVE) form a disordered region.

This sequence belongs to the heat shock protein 70 family.

In terms of biological role, acts as a chaperone. This chain is Chaperone protein DnaK, found in Helicobacter pylori (strain Shi470).